A 504-amino-acid chain; its full sequence is MPGRHVTDHQMRLFMKYRQTHSVEVAAAKASISRATAFRMEKEQRLPSQNKPPRGRRRPDPLEHIFDAEVVPLLKAAPGIRAVAVYDEMLRRHPELPEGIRRTLERRIRSWRAVHGEAQEVIFRQTHEPGRLGLSDFTDMGSLSVTIAGQPLDHLLYHFRLVWSGFEHAHVILGGESFVALAEGLQNALWSVGGSPLYHRSDSLSAAFRNLDADAKVDLTNRYEELCAHYRMTPTRNNKGVAHENGSIESSHGHLKNAVRDALLMRGTRDFDDLRSYRAFIDEIVSRRNAAHGKRIDAERPHLQVLPERRTTDFEEVVVTVSRTGGFALRKVFYTVPSRLIGHRLRVRLFDDRLDVFIGGTHLLTLPRGRAHASGKHDQVVNYHHVIHSLRKKPMALLNLVYRDKLFPRPEYRRAFDALIEQLPDRQACKITVELLALAHDRGCERELAEELARTLDARKLPDLMALRAIFGPDPDQLPTVHVQLASLNSYEALMGSAYAGEAA.

Residues 36 to 60 (TAFRMEKEQRLPSQNKPPRGRRRPD) are disordered. Residues 125–309 (QTHEPGRLGL…RPHLQVLPER (185 aa)) enclose the Integrase catalytic domain.

This is an uncharacterized protein from Sinorhizobium fredii (strain NBRC 101917 / NGR234).